A 1749-amino-acid chain; its full sequence is Intraflagellar transport protein 172 homolog (1749 aa).

An N-acetylmethionine modification is found at M1. K4 participates in a covalent cross-link: Glycyl lysine isopeptide (Lys-Gly) (interchain with G-Cter in SUMO1). WD repeat units lie at residues 14–53 (DGAA…RDKF), 64–103 (RKSY…GDKK), 110–148 (IQTS…SSTI), 150–191 (GTES…ESQG), 195–233 (NHPC…QTFD), 238–278 (PQER…WEEA), 284–323 (TNLY…SIYK), 483–520 (SHES…CSKT), and 521–559 (MILN…ERVT). One copy of the TPR 1 repeat lies at 593-624 (DEGLIEFGTAIDDGNYIRATAFLETLEMTPET). Position 672 is an omega-N-methylarginine (R672). TPR repeat units lie at residues 692-725 (EKNY…DECI), 809-842 (GELY…MKAV), 854-887 (VKLE…IKAI), 912-945 (SKYY…KDAI), 947-970 (MYTQ…PEDV), 971-1004 (SVLY…DLAI), 1042-1075 (EGRL…EEAY), 1142-1175 (PEVH…KEAV), 1276-1309 (VEGF…GNSG), 1345-1378 (IGKH…NKAK), 1411-1445 (GVDV…LHKY), 1447-1477 (ALYA…NPQN), and 1574-1607 (DKAF…TDAI).

This sequence belongs to the IFT172 family. In terms of assembly, interacts with IFT88. Interacts with IFT57. Interacts with RABL2/RABL2A; binds preferentially to GDP-bound RABL2.

It localises to the cell projection. The protein localises to the cilium. Its function is as follows. Required for the maintenance and formation of cilia. Plays an indirect role in hedgehog (Hh) signaling, cilia being required for all activity of the hedgehog pathway. The protein is Intraflagellar transport protein 172 homolog (IFT172) of Homo sapiens (Human).